The primary structure comprises 482 residues: MQWETVIGLEIHAQLATRSKIFSGSATAFGAEPNTQASLIDLGMPGTLPVLNEETVRMAVRFGLAIEAEIGHTNVFARKNYFYPDLPKGYQTSQMDKPIVGKGHLDITLEDGTLKRIGITRAHLEEDAGKSLHEDFHGMTGIDLNRAGTPLLEIVSEPDIRSAKEAVAYVKAIHALVRYLGICDGNMAEGSLRCDCNVSVRPRGQEAFGTRAEIKNVNSFRFIEKAINHEIQRQIELIEDGGKVIQETRLYDPNKDETRSMRGKEEANDYRYFPCPDLLPVVLEDGFVERLRETLPELPNQKRERFQSQYGLSAYDASVLSASREMAEYFEAVFEVCGDAKLAANWVMGELSSLLNKEGLEIERSPVSAEQLGGLIRRIQDNTISGKIAKMVFEALAADEGASADAIIERKGLKQVTDTGAIESMLDEMLAANAAQVEQYRAADEAKRAKMFGFFVGQAMKASKGKANPGQVNELLKKKLEG.

Belongs to the GatB/GatE family. GatB subfamily. In terms of assembly, heterotrimer of A, B and C subunits.

The catalysed reaction is L-glutamyl-tRNA(Gln) + L-glutamine + ATP + H2O = L-glutaminyl-tRNA(Gln) + L-glutamate + ADP + phosphate + H(+). It carries out the reaction L-aspartyl-tRNA(Asn) + L-glutamine + ATP + H2O = L-asparaginyl-tRNA(Asn) + L-glutamate + ADP + phosphate + 2 H(+). Its function is as follows. Allows the formation of correctly charged Asn-tRNA(Asn) or Gln-tRNA(Gln) through the transamidation of misacylated Asp-tRNA(Asn) or Glu-tRNA(Gln) in organisms which lack either or both of asparaginyl-tRNA or glutaminyl-tRNA synthetases. The reaction takes place in the presence of glutamine and ATP through an activated phospho-Asp-tRNA(Asn) or phospho-Glu-tRNA(Gln). This Azotobacter vinelandii (strain DJ / ATCC BAA-1303) protein is Aspartyl/glutamyl-tRNA(Asn/Gln) amidotransferase subunit B.